The sequence spans 906 residues: Inter-alpha-trypsin inhibitor heavy chain H1 (906 aa).

The signal sequence occupies residues 1–22; sequence MGLRGLLCVCLVSLLALQAVAA. A propeptide spanning residues 23–29 is cleaved from the precursor; the sequence is QGSPTRN. In terms of domain architecture, VIT spans 32–161; it reads GGKKRMAVDA…KATFRLTYEE (130 aa). Residue Cys55 is glycosylated (S-linked (Hex...) cysteine). The residue at position 124 (Ser124) is a Phosphoserine. Residues 287 to 470 form the VWFA domain; the sequence is NVVFVIDISS…QQLQGFYEQV (184 aa). Phosphothreonine is present on residues Thr397 and Thr402. N-linked (GlcNAc...) asparagine glycosylation occurs at Asn583. An O-linked (GalNAc...) serine glycan is attached at Ser643. O-linked (GalNAc...) threonine glycosylation is present at Thr648. Asp667 is subject to Aspartate 1-(chondroitin 4-sulfate)-ester. A propeptide spanning residues 668–906 is cleaved from the precursor; that stretch reads PHFLIHVPQK…HTDYIVPDIF (239 aa). An N-linked (GlcNAc...) asparagine glycan is attached at Asn745.

It belongs to the ITIH family. As to quaternary structure, I-alpha-I plasma protease inhibitors are assembled from one or two heavy chains (HC) and one light chain, bikunin. Inter-alpha-inhibitor (I-alpha-I) is composed of ITIH1/HC1, ITIH2/HC2 and bikunin. Interacts with TNFAIP6 (via Link and CUB domains). Heavy chains are linked to bikunin via chondroitin 4-sulfate esterified to the alpha-carboxyl of the C-terminal aspartate after propeptide cleavage. In terms of processing, the S-linked glycan is composed of two 6-carbon sugars, possibly Glc or Gal.

The protein resides in the secreted. May act as a carrier of hyaluronan in serum or as a binding protein between hyaluronan and other matrix protein, including those on cell surfaces in tissues to regulate the localization, synthesis and degradation of hyaluronan which are essential to cells undergoing biological processes. The sequence is that of Inter-alpha-trypsin inhibitor heavy chain H1 (ITIH1) from Bos taurus (Bovine).